We begin with the raw amino-acid sequence, 240 residues long: Uridylate kinase (240 aa).

13 to 16 lines the ATP pocket; it reads KLSG. The segment at 21–26 is involved in allosteric activation by GTP; that stretch reads GDDGFG. A UMP-binding site is contributed by Gly-55. 2 residues coordinate ATP: Gly-56 and Arg-60. UMP is bound by residues Asp-75 and 136 to 143; that span reads IGNPYFST. Asn-164, Tyr-170, and Asp-173 together coordinate ATP.

This sequence belongs to the UMP kinase family. In terms of assembly, homohexamer.

The protein resides in the cytoplasm. The catalysed reaction is UMP + ATP = UDP + ADP. It participates in pyrimidine metabolism; CTP biosynthesis via de novo pathway; UDP from UMP (UMPK route): step 1/1. Its activity is regulated as follows. Allosterically activated by GTP. Inhibited by UTP. Its function is as follows. Catalyzes the reversible phosphorylation of UMP to UDP. This chain is Uridylate kinase, found in Staphylococcus saprophyticus subsp. saprophyticus (strain ATCC 15305 / DSM 20229 / NCIMB 8711 / NCTC 7292 / S-41).